The primary structure comprises 337 residues: Glucose transporter 2C (337 aa).

Residues Met-1–Ala-22 form a disordered region. Over Met-1–Gln-43 the chain is Cytoplasmic. Residues Val-44–Tyr-64 form a helical membrane-spanning segment. Residues Glu-65–Ser-119 are Extracellular-facing. N-linked (GlcNAc...) asparagine glycosylation is present at Asn-69. Residues Leu-120–Ala-140 traverse the membrane as a helical segment. The Cytoplasmic segment spans residues Gly-141–Ser-152. The chain crosses the membrane as a helical span at residues Phe-153 to Thr-173. The Extracellular segment spans residues Asn-174–Glu-175. A helical membrane pass occupies residues Phe-176 to Ile-196. The Cytoplasmic segment spans residues Cys-197–Gly-214. Residues Val-215–Leu-235 traverse the membrane as a helical segment. Topologically, residues Asp-236–Arg-250 are extracellular. The helical transmembrane segment at Phe-251–Phe-271 threads the bilayer. The Cytoplasmic portion of the chain corresponds to Leu-272–Gln-300. The chain crosses the membrane as a helical span at residues Met-301–Asn-321. Over Ala-322–Asp-337 the chain is Extracellular.

This sequence belongs to the major facilitator superfamily. Sugar transporter (TC 2.A.1.1) family.

It is found in the membrane. Its function is as follows. Facilitative glucose transporter. In Trypanosoma brucei brucei, this protein is Glucose transporter 2C (THT2C).